The sequence spans 384 residues: Cytochrome b (384 aa).

4 helical membrane-spanning segments follow: residues 32-52, 76-98, 113-133, and 179-199; these read FGSL…FLAM, WLLR…LHMA, LWNM…MGYC, and FFSL…LHLL. His-82 and His-96 together coordinate heme b. Heme b-binding residues include His-183 and His-197. His-202 contacts a ubiquinone. Transmembrane regions (helical) follow at residues 225–245, 289–309, 321–341, and 348–368; these read FLFK…FLIS, MMGV…PFVD, LSKI…LIGA, and YIII…ILLP.

The protein belongs to the cytochrome b family. Fungal cytochrome b-c1 complex contains 10 subunits; 3 respiratory subunits, 2 core proteins and 5 low-molecular weight proteins. Cytochrome b-c1 complex is a homodimer. The cofactor is heme b.

Its subcellular location is the mitochondrion inner membrane. Functionally, component of the ubiquinol-cytochrome c reductase complex (complex III or cytochrome b-c1 complex) that is part of the mitochondrial respiratory chain. The b-c1 complex mediates electron transfer from ubiquinol to cytochrome c. Contributes to the generation of a proton gradient across the mitochondrial membrane that is then used for ATP synthesis. The polypeptide is Cytochrome b (COB) (Starmerella bacillaris (Yeast)).